Here is a 472-residue protein sequence, read N- to C-terminus: Methanethiol oxidase (472 aa).

The protein belongs to the selenium-binding protein family.

Its subcellular location is the nucleus. It localises to the cytoplasm. The protein localises to the cytosol. The protein resides in the membrane. The enzyme catalyses methanethiol + O2 + H2O = hydrogen sulfide + formaldehyde + H2O2 + H(+). It functions in the pathway organosulfur degradation. Catalyzes the oxidation of methanethiol, an organosulfur compound known to be produced in substantial amounts by gut bacteria. Selenium-binding protein which may be involved in the sensing of reactive xenobiotics in the cytoplasm. May be involved in intra-Golgi protein transport. This Xenopus laevis (African clawed frog) protein is Methanethiol oxidase (selenbp1-a).